A 123-amino-acid polypeptide reads, in one-letter code: Large ribosomal subunit protein uL29 (123 aa).

It belongs to the universal ribosomal protein uL29 family. In terms of assembly, component of the large ribosomal subunit.

The protein resides in the cytoplasm. Its function is as follows. Component of the large ribosomal subunit. The ribosome is a large ribonucleoprotein complex responsible for the synthesis of proteins in the cell. Plays an essential role in early embryonic development. May act as a haploinsufficient tumor suppressor. This chain is Large ribosomal subunit protein uL29 (rpl35), found in Danio rerio (Zebrafish).